Reading from the N-terminus, the 495-residue chain is UDP-glycosyltransferase 1 (495 aa).

The active-site Proton acceptor is the His24. Residue His24 participates in an anthocyanidin binding. The Charge relay role is filled by Asp129. UDP-alpha-D-glucose contacts are provided by Gln358, His373, Trp376, Asn377, Ser378, and Glu381. An an anthocyanidin-binding site is contributed by Gly396. UDP-alpha-D-glucose contacts are provided by Asp397 and Gln398.

This sequence belongs to the UDP-glycosyltransferase family.

It catalyses the reaction oleanolate + UDP-alpha-D-glucose = oleanolate 3-O-beta-D-glucoside + UDP + H(+). Functionally, catalyzes the transfer of a glucose (Glc) moiety from UDP-Glc to the C-3 position of the oleanane sapogenins oleanolate and hederagenin. The monoglucosylated hederagenin 3-O-beta-D-glucoside is a feeding deterrent of the yellow-striped flea beetle (Phyllotreta nemorum). The protein is UDP-glycosyltransferase 1 of Barbarea vulgaris (Yellow rocket).